We begin with the raw amino-acid sequence, 195 residues long: MEPVRKVEGKALPLGYSDVDTDQIVPSDALKRIERTGFGRFLFAEWREDPDFVLNKPEHQGAVVLIAGENFGCGSSREHAVWAVQDYGFGAVIAPSFADIFKNNCTKNGVLTVELPKETVRRLLEAVREDPEATVTVDLESRTVKGPGVETTFEIDDFVRYRLLNGLDDVGLTLRHEEDIERFERSRPRYMPRVL.

It belongs to the LeuD family. LeuD type 1 subfamily. As to quaternary structure, heterodimer of LeuC and LeuD.

It carries out the reaction (2R,3S)-3-isopropylmalate = (2S)-2-isopropylmalate. It participates in amino-acid biosynthesis; L-leucine biosynthesis; L-leucine from 3-methyl-2-oxobutanoate: step 2/4. Its function is as follows. Catalyzes the isomerization between 2-isopropylmalate and 3-isopropylmalate, via the formation of 2-isopropylmaleate. This is 3-isopropylmalate dehydratase small subunit from Rubrobacter xylanophilus (strain DSM 9941 / JCM 11954 / NBRC 16129 / PRD-1).